Reading from the N-terminus, the 1372-residue chain is Cell fusion protein fus1 (1372 aa).

The 419-residue stretch at 104-522 folds into the GBD/FH3 domain; the sequence is LCPDDPNLVN…EQGNNAPGYS (419 aa). The short motif at 802-817 is the SH3-binding element; the sequence is PFKAPPPAPLPPPAPP. Residues 868-1278 enclose the FH2 domain; the sequence is PGELCNPSKR…AFLRLQALKA (411 aa).

The protein belongs to the formin homology family. BNI1 subfamily. Interacts with actin at the FH2 domain.

It is found in the cytoplasm. In terms of biological role, required for cell fusion. It associates with the pre-zygotic projection tips in conjugating cells. The chain is Cell fusion protein fus1 (fus1) from Schizosaccharomyces pombe (strain 972 / ATCC 24843) (Fission yeast).